A 141-amino-acid chain; its full sequence is Hemoglobin subunit alpha-A (141 aa).

Positions Val1–Arg141 constitute a Globin domain. An O2-binding site is contributed by His58. His87 contacts heme b.

The protein belongs to the globin family. Heterotetramer of two alpha chains and two beta chains. Red blood cells.

Functionally, involved in oxygen transport from the lung to the various peripheral tissues. In Chrysemys picta bellii (Western painted turtle), this protein is Hemoglobin subunit alpha-A (HBAA).